Reading from the N-terminus, the 100-residue chain is Urease subunit gamma (100 aa).

It belongs to the urease gamma subunit family. In terms of assembly, heterotrimer of UreA (gamma), UreB (beta) and UreC (alpha) subunits. Three heterotrimers associate to form the active enzyme.

The protein localises to the cytoplasm. The enzyme catalyses urea + 2 H2O + H(+) = hydrogencarbonate + 2 NH4(+). The protein operates within nitrogen metabolism; urea degradation; CO(2) and NH(3) from urea (urease route): step 1/1. The protein is Urease subunit gamma of Stutzerimonas stutzeri (strain A1501) (Pseudomonas stutzeri).